The following is a 284-amino-acid chain: Homoserine O-acetyltransferase 2 (284 aa).

Residue cysteine 133 is the Acyl-thioester intermediate of the active site. Positions 154 and 178 each coordinate substrate. Histidine 220 serves as the catalytic Proton acceptor. Residue glutamate 222 is part of the active site. Residue arginine 234 coordinates substrate.

It belongs to the MetA family.

It localises to the cytoplasm. The enzyme catalyses L-homoserine + acetyl-CoA = O-acetyl-L-homoserine + CoA. Its pathway is amino-acid biosynthesis; L-methionine biosynthesis via de novo pathway; O-acetyl-L-homoserine from L-homoserine: step 1/1. Its function is as follows. Transfers an acetyl group from acetyl-CoA to L-homoserine, forming acetyl-L-homoserine. This chain is Homoserine O-acetyltransferase 2, found in Ilyobacter polytropus (strain ATCC 51220 / DSM 2926 / LMG 16218 / CuHBu1).